Consider the following 371-residue polypeptide: tRNA-specific 2-thiouridylase MnmA (371 aa).

ATP contacts are provided by residues 13–20 and methionine 39; that span reads GMSGGVDS. Residues 99–101 form an interaction with target base in tRNA region; that stretch reads NPD. The active-site Nucleophile is cysteine 104. The cysteines at positions 104 and 200 are disulfide-linked. Glycine 128 lines the ATP pocket. The interval 150 to 152 is interaction with tRNA; sequence KDQ. Cysteine 200 serves as the catalytic Cysteine persulfide intermediate. The segment at 308-309 is interaction with tRNA; sequence RY.

The protein belongs to the MnmA/TRMU family.

Its subcellular location is the cytoplasm. The catalysed reaction is S-sulfanyl-L-cysteinyl-[protein] + uridine(34) in tRNA + AH2 + ATP = 2-thiouridine(34) in tRNA + L-cysteinyl-[protein] + A + AMP + diphosphate + H(+). Its function is as follows. Catalyzes the 2-thiolation of uridine at the wobble position (U34) of tRNA, leading to the formation of s(2)U34. This Listeria monocytogenes serovar 1/2a (strain ATCC BAA-679 / EGD-e) protein is tRNA-specific 2-thiouridylase MnmA.